The following is a 310-amino-acid chain: Nucleotide-binding protein BAD_0837 (310 aa).

31 to 38 is an ATP binding site; the sequence is GMSGAGRS. Position 82 to 85 (82 to 85) interacts with GTP; sequence DVRS.

The protein belongs to the RapZ-like family.

In terms of biological role, displays ATPase and GTPase activities. This chain is Nucleotide-binding protein BAD_0837, found in Bifidobacterium adolescentis (strain ATCC 15703 / DSM 20083 / NCTC 11814 / E194a).